Reading from the N-terminus, the 488-residue chain is MIPVVALVGRPNVGKSTLFNRLTRTRDALVADFPGLTRDRKYGRAFLSGYEFIVVDTGGIDGTEEGIETKMAEQSLAAIEEADVVLFMTDARAGLTAADLSIAQHLRSRQKTTFVVANKIDGIDADSACAEFWSLGLGEVYQMAAAQGRGVTNMIEYALTPYAEAMGIERQGEEEEVDERQYTEEEAEAEQKRLQDLPIKLAIIGKPNVGKSTLTNRILGEERVVVYDEPGTTRDSIYIPMERDGREYVIIDTAGVRRRSKVHEVIEKFSVIKTLKAVEDANVVLLIIDAREGVAEQDLGLLGFALNAGRALVIAVNKWDGIDQGIKDRVKSELDRRLGFIDFARIHFISALHGTGVGHLFESIEEAYDSATRRVSTSMLTRIMQMSQDDHQPPLVNGRRVKLKYAHAGGYNPPIVVIHGNQVSKLPDSYKRYMMNYFRRSLKVVGTPIQLRFQEGDNPFENKVEKLTMSQERRRKRALSHIKDRKTK.

EngA-type G domains are found at residues 3 to 166 (PVVA…AEAM) and 199 to 372 (IKLA…DSAT). GTP contacts are provided by residues 9 to 16 (GRPNVGKS), 56 to 60 (DTGGI), 118 to 121 (NKID), 205 to 212 (GKPNVGKS), 252 to 256 (DTAGV), and 317 to 320 (NKWD). Residues 373–457 (RRVSTSMLTR…PIQLRFQEGD (85 aa)) enclose the KH-like domain.

Belongs to the TRAFAC class TrmE-Era-EngA-EngB-Septin-like GTPase superfamily. EngA (Der) GTPase family. As to quaternary structure, associates with the 50S ribosomal subunit.

In terms of biological role, GTPase that plays an essential role in the late steps of ribosome biogenesis. This Shewanella sp. (strain MR-7) protein is GTPase Der.